Reading from the N-terminus, the 385-residue chain is Podocin (385 aa).

Residues 1 to 27 (MDSRARSSSREAHGRSSRSSSRDDKKA) show a composition bias toward basic and acidic residues. A disordered region spans residues 1 to 64 (MDSRARSSSR…GEPRAPAATA (64 aa)). At 1-104 (MDSRARSSSR…IKPSGLGACE (104 aa)) the chain is on the cytoplasmic side. Cys-103 carries S-palmitoyl cysteine lipidation. Residues 105–125 (WLLVLASLIFIIMTFPFSIWF) traverse the membrane as a helical segment. The Extracellular segment spans residues 126–385 (CIKVVQEYER…NPKKKDSPML (260 aa)). Polar residues predominate over residues 357-370 (NRAQGSINYPSSSK). Residues 357–385 (NRAQGSINYPSSSKPVEPLNPKKKDSPML) form a disordered region. Positions 376–385 (NPKKKDSPML) are enriched in basic and acidic residues.

The protein belongs to the band 7/mec-2 family. As to quaternary structure, interacts with nephrin/NPHS1, KIRRL1 and CD2AP. Interacts with DDN.

Its subcellular location is the membrane. Functionally, plays a role in the regulation of glomerular permeability, acting probably as a linker between the plasma membrane and the cytoskeleton. This chain is Podocin (Nphs2), found in Mus musculus (Mouse).